The following is a 222-amino-acid chain: Putative RING finger protein ORF118 (222 aa).

The RING-type zinc-finger motif lies at 78 to 114; sequence CCICMAKNNRKEALPCQHNVCRDCYYKPMRNNCPVCN. A disordered region spans residues 184-222; that stretch reads IENRIHNNNNNNYDENNPDDLPVIHPPRRRHRQTAHISI. The segment covering 189-198 has biased composition (low complexity); it reads HNNNNNNYDE. Residues 209–222 are compositionally biased toward basic residues; it reads PPRRRHRQTAHISI.

This is Putative RING finger protein ORF118 from Magallana gigas (Pacific oyster).